The sequence spans 423 residues: Pseudouridylate synthase 1 homolog (423 aa).

The interval 32–75 (AGNKVPPALASHQPDRKGRGGWVWEETEHPAKRVKGGEDEEPPR) is disordered. The span at 57–68 (ETEHPAKRVKGG) shows a compositional bias: basic and acidic residues. The active-site Nucleophile is D142. Positions 403 to 423 (ADTGAKVPSSLEGSEGDGDTD) are disordered. 2 positions are modified to phosphoserine: S411 and S416. The residue at position 422 (T422) is a Phosphothreonine.

This sequence belongs to the tRNA pseudouridine synthase TruA family. Monomer. Forms a complex with RARG and the SRA1 RNA in the nucleus.

The protein resides in the nucleus. Its subcellular location is the cytoplasm. The protein localises to the mitochondrion. It catalyses the reaction a uridine in tRNA = a pseudouridine in tRNA. It carries out the reaction uridine(38/39/40) in tRNA = pseudouridine(38/39/40) in tRNA. The catalysed reaction is a uridine in mRNA = a pseudouridine in mRNA. Its function is as follows. Pseudouridylate synthase that catalyzes pseudouridylation of tRNAs and mRNAs. Acts on positions 27/28 in the anticodon stem and also positions 34 and 36 in the anticodon of an intron containing tRNA. Also catalyzes pseudouridylation of mRNAs: mediates pseudouridylation of mRNAs with the consensus sequence 5'-UGUAG-3'. Acts as a regulator of pre-mRNA splicing by mediating pseudouridylation of pre-mRNAs at locations associated with alternatively spliced regions. Pseudouridylation of pre-mRNAs near splice sites directly regulates mRNA splicing and mRNA 3'-end processing. Involved in regulation of nuclear receptor activity through pseudouridylation of SRA1 mRNA. Does not form pseudouridine when expressed in vitro. The polypeptide is Pseudouridylate synthase 1 homolog (Mus musculus (Mouse)).